The following is a 324-amino-acid chain: MQKTIWAEVPWLHPGFAQTCIDFYQLTKPRLILLFLITTAAAMWVASSGQVGPRLFLTTLLAGACAAGSANTINCIYDRDIDYIMERTRHRPLPSGRIQVWQASVFAASLALTAFFLLAFGANLLSACLAMAGIAVYIGVYTYWLKRSSTQNIVIGGAAGAIPPLVGWAAVTGELSWAAWVLFAIIFIWTPPHFWPLAMMIEEDYSKVGVPMMPVVNGMATTANQTFIYTLLLLPVTLLLVYPLKVSGALYASIAIVLWVQFIHKAWQLTQTPDDKQMARSVFKFSILYMMLLCAGMGVDSLPWTQQIWHHSTHILQAWIPSIG.

The next 9 membrane-spanning stretches (helical) occupy residues 31–51 (LILL…SGQV), 56–76 (FLTT…INCI), 105–125 (VFAA…ANLL), 126–146 (SACL…YWLK), 153–173 (IVIG…AVTG), 181–201 (VLFA…AMMI), 214–234 (PVVN…LLLL), 238–258 (LLLV…AIVL), and 285–305 (FSIL…LPWT).

This sequence belongs to the UbiA prenyltransferase family. Protoheme IX farnesyltransferase subfamily.

The protein resides in the cell inner membrane. It carries out the reaction heme b + (2E,6E)-farnesyl diphosphate + H2O = Fe(II)-heme o + diphosphate. It functions in the pathway porphyrin-containing compound metabolism; heme O biosynthesis; heme O from protoheme: step 1/1. In terms of biological role, converts heme B (protoheme IX) to heme O by substitution of the vinyl group on carbon 2 of heme B porphyrin ring with a hydroxyethyl farnesyl side group. This is Protoheme IX farnesyltransferase from Acaryochloris marina (strain MBIC 11017).